We begin with the raw amino-acid sequence, 236 residues long: Large ribosomal subunit protein uL2 (236 aa).

Positions 1 to 10 are enriched in polar residues; that stretch reads MGHRITTQSR. Disordered regions lie at residues 1-20 and 202-236; these read MGHRITTQSRGHGGPTYRAP and GGGGHQHAGRPKTVSRGTSPGRKVGHIAARRTGRR. The span at 224 to 236 shows a compositional bias: basic residues; that stretch reads KVGHIAARRTGRR.

It belongs to the universal ribosomal protein uL2 family. Part of the 50S ribosomal subunit. Forms a bridge to the 30S subunit in the 70S ribosome.

Its function is as follows. One of the primary rRNA binding proteins. Required for association of the 30S and 50S subunits to form the 70S ribosome, for tRNA binding and peptide bond formation. It has been suggested to have peptidyltransferase activity; this is somewhat controversial. Makes several contacts with the 16S rRNA in the 70S ribosome. This is Large ribosomal subunit protein uL2 from Methanospirillum hungatei JF-1 (strain ATCC 27890 / DSM 864 / NBRC 100397 / JF-1).